We begin with the raw amino-acid sequence, 449 residues long: Signal recognition particle protein (449 aa).

GTP-binding positions include 109–116 (GLQGGGKT), 191–195 (DTAGR), and 249–252 (SRID).

It belongs to the GTP-binding SRP family. SRP54 subfamily. As to quaternary structure, part of the signal recognition particle protein translocation system, which is composed of SRP and FtsY. SRP is a ribonucleoprotein composed of Ffh and a 4.5S RNA molecule.

The protein localises to the cytoplasm. It catalyses the reaction GTP + H2O = GDP + phosphate + H(+). Involved in targeting and insertion of nascent membrane proteins into the cytoplasmic membrane. Binds to the hydrophobic signal sequence of the ribosome-nascent chain (RNC) as it emerges from the ribosomes. The SRP-RNC complex is then targeted to the cytoplasmic membrane where it interacts with the SRP receptor FtsY. Interaction with FtsY leads to the transfer of the RNC complex to the Sec translocase for insertion into the membrane, the hydrolysis of GTP by both Ffh and FtsY, and the dissociation of the SRP-FtsY complex into the individual components. This chain is Signal recognition particle protein, found in Rickettsia prowazekii (strain Madrid E).